The following is a 1400-amino-acid chain: Clustered mitochondria protein homolog (1400 aa).

Disordered stretches follow at residues 1 to 39 (MVSK…KEAS), 56 to 78 (GHDQ…QAED), and 212 to 243 (GDTG…KERP). Over residues 56-69 (GHDQAEEADSKQDG) the composition is skewed to basic and acidic residues. The 243-residue stretch at 380-622 (RAEDAYTSRL…RTFPPDLNFL (243 aa)) folds into the Clu domain. The interval 684–741 (AALQDSNAAGAGSENKPLALESCDGTPDSPTSSESTLTPEDSEATTVSENSSAENQEA) is disordered. Residues 707–722 (DGTPDSPTSSESTLTP) are compositionally biased toward low complexity. Residues 727 to 741 (ATTVSENSSAENQEA) show a composition bias toward polar residues. TPR repeat units follow at residues 1088 to 1121 (AFHF…FNNV), 1130 to 1163 (CACL…SERV), 1172 to 1205 (IQEY…MLVV), and 1214 to 1247 (ALLD…NTKY). The span at 1377–1388 (QDSGKIQEQQGS) shows a compositional bias: polar residues. The disordered stretch occupies residues 1377 to 1400 (QDSGKIQEQQGSHLELDDKLPVDD). A compositionally biased stretch (basic and acidic residues) spans 1390–1400 (LELDDKLPVDD).

Belongs to the CLU family.

Its subcellular location is the cytoplasm. Its function is as follows. mRNA-binding protein involved in proper cytoplasmic distribution of mitochondria. The protein is Clustered mitochondria protein homolog of Danio rerio (Zebrafish).